Consider the following 228-residue polypeptide: MHIEKLDFENSPYLGVYGTATDRVALIREGLGEKKLEVLREVLKVPLIETSIMKSRIVGVFAAGNSNAIVVPWYIWDAELEHIQNELNELDIDMRIEPFQSTLTAFGNLILANDKAALISVKFTREEAKKLEDILGVEVERGMIGDYHAVGSVGVVTNRGGLVHPEATDEELEWLRDLFKVDIYVGTANMGVPFVGSCMLANSHGVVVGHLTTGPEIVKIEEALGFLD.

Belongs to the eIF-6 family.

Its function is as follows. Binds to the 50S ribosomal subunit and prevents its association with the 30S ribosomal subunit to form the 70S initiation complex. The sequence is that of Translation initiation factor 6 from Thermococcus onnurineus (strain NA1).